An 816-amino-acid polypeptide reads, in one-letter code: Phenylalanine--tRNA ligase beta subunit (816 aa).

The tRNA-binding domain maps to 40–148 (FEELAALKTG…EGMAHGQRFI (109 aa)). One can recognise a B5 domain in the interval 401 to 479 (KAVEVQRFSI…RIYGYDNVPT (79 aa)). Mg(2+) is bound by residues aspartate 457, aspartate 463, glutamate 466, and glutamate 467. One can recognise an FDX-ACB domain in the interval 721–814 (PVYPAVKRDI…LTDRFGGSFR (94 aa)).

The protein belongs to the phenylalanyl-tRNA synthetase beta subunit family. Type 1 subfamily. Tetramer of two alpha and two beta subunits. Mg(2+) serves as cofactor.

It is found in the cytoplasm. It carries out the reaction tRNA(Phe) + L-phenylalanine + ATP = L-phenylalanyl-tRNA(Phe) + AMP + diphosphate + H(+). The sequence is that of Phenylalanine--tRNA ligase beta subunit from Desulfotalea psychrophila (strain LSv54 / DSM 12343).